A 273-amino-acid polypeptide reads, in one-letter code: Large ribosomal subunit protein uL2 (273 aa).

The disordered stretch occupies residues Arg221–Lys273. Over residues Lys253–Lys273 the composition is skewed to basic residues.

It belongs to the universal ribosomal protein uL2 family. Part of the 50S ribosomal subunit. Forms a bridge to the 30S subunit in the 70S ribosome.

Functionally, one of the primary rRNA binding proteins. Required for association of the 30S and 50S subunits to form the 70S ribosome, for tRNA binding and peptide bond formation. It has been suggested to have peptidyltransferase activity; this is somewhat controversial. Makes several contacts with the 16S rRNA in the 70S ribosome. The polypeptide is Large ribosomal subunit protein uL2 (Glaesserella parasuis serovar 5 (strain SH0165) (Haemophilus parasuis)).